A 150-amino-acid polypeptide reads, in one-letter code: Protein E6 (150 aa).

Zinc fingers lie at residues C31–C67 and C104–C140.

The protein belongs to the papillomaviridae E6 protein family. Forms homodimers. Interacts with ubiquitin-protein ligase UBE3A/E6-AP; this interaction stimulates UBE3A ubiquitin activity. Interacts with host TP53 and EP300; this interaction inhibits TP53 activity.

The protein resides in the host cytoplasm. Its subcellular location is the host nucleus. In terms of biological role, plays a major role in the induction and maintenance of cellular transformation. E6 associates with host UBE3A/E6-AP ubiquitin-protein ligase and modulates its activity. Sequesters tumor suppressor TP53 in the host cytoplasm and modulates its activity by interacting with host EP300 that results in the reduction of TP53 acetylation and activation. In turn, apoptosis induced by DNA damage is inhibited. E6 also protects host keratinocytes from apoptosis by mediating the degradation of host BAK1. May also inhibit host immune response. This chain is Protein E6, found in Human papillomavirus 13.